Here is a 548-residue protein sequence, read N- to C-terminus: MSGDTGPPKQGGTRYGSISSPPSPEPQQAPPGGTYLSEKIPIPDTESGTFSLRKLWAFTGPGFLMSIAFLDPGNIESDLQAGAVAGFKLLWVLLWATVLGLLCQRLAARLGVVTGKDLGEVCHLYYPKVPRILLWLTIELAIVGSDMQEVIGTAIAFSLLSAGRIPLWGGVLITIVDAFFFLFLDNYGLRKLEAFFGFLITIMALTFGYEYVVAQPAQGALLQGLFLPSCPGCGQPELLQAVGIIGAIIMPHNIYLHSSLVKSREVDRSRRADIREANMYFLIEATIALSVSFLINLFVMAVFGQAFYKQTNQAAFNICANSSLQDYAPIFPRNNLTVAVDIYQGGVILGCLFGPAALYIWAVGLLAAGQSSTMTGTYAGQFVMEGFLKLRWSRFARVLLTRSCAILPTVLLAVFRDLRDLSGLNDLLNVLQSLLLPFAVLPILTFTSMPALMREFANGLVSKVITSSIMVLVCAVNLYFVISYVPSLPHPAYFSLVALLAAAYLGLTTYLVWTCLITQGATLLAHSSHQRFLYGLPEEDQEKGRTSG.

The tract at residues 1–38 (MSGDTGPPKQGGTRYGSISSPPSPEPQQAPPGGTYLSE) is disordered. At 1 to 55 (MSGDTGPPKQGGTRYGSISSPPSPEPQQAPPGGTYLSEKIPIPDTESGTFSLRKL) the chain is on the cytoplasmic side. Residues 56–73 (WAFTGPGFLMSIAFLDPG) traverse the membrane as a helical segment. Residues 74-82 (NIESDLQAG) are Extracellular-facing. A helical transmembrane segment spans residues 83-102 (AVAGFKLLWVLLWATVLGLL). At 103 to 139 (CQRLAARLGVVTGKDLGEVCHLYYPKVPRILLWLTIE) the chain is on the cytoplasmic side. A helical transmembrane segment spans residues 140 to 160 (LAIVGSDMQEVIGTAIAFSLL). Over 161–164 (SAGR) the chain is Extracellular. Residues 165–184 (IPLWGGVLITIVDAFFFLFL) form a helical membrane-spanning segment. Residues 185 to 193 (DNYGLRKLE) are Cytoplasmic-facing. The helical transmembrane segment at 194–214 (AFFGFLITIMALTFGYEYVVA) threads the bilayer. At 215-237 (QPAQGALLQGLFLPSCPGCGQPE) the chain is on the extracellular side. Residues 238-256 (LLQAVGIIGAIIMPHNIYL) traverse the membrane as a helical segment. Topologically, residues 257–284 (HSSLVKSREVDRSRRADIREANMYFLIE) are cytoplasmic. The chain crosses the membrane as a helical span at residues 285–304 (ATIALSVSFLINLFVMAVFG). Topologically, residues 305–346 (QAFYKQTNQAAFNICANSSLQDYAPIFPRNNLTVAVDIYQGG) are extracellular. 2 N-linked (GlcNAc...) asparagine glycosylation sites follow: Asn321 and Asn335. Residues 347–366 (VILGCLFGPAALYIWAVGLL) traverse the membrane as a helical segment. Topologically, residues 367–397 (AAGQSSTMTGTYAGQFVMEGFLKLRWSRFAR) are cytoplasmic. A helical transmembrane segment spans residues 398-415 (VLLTRSCAILPTVLLAVF). The Extracellular portion of the chain corresponds to 416 to 426 (RDLRDLSGLND). Residues 427-447 (LLNVLQSLLLPFAVLPILTFT) traverse the membrane as a helical segment. The Cytoplasmic segment spans residues 448–463 (SMPALMREFANGLVSK). A helical membrane pass occupies residues 464-485 (VITSSIMVLVCAVNLYFVISYV). The Extracellular segment spans residues 486–493 (PSLPHPAY). A helical transmembrane segment spans residues 494–513 (FSLVALLAAAYLGLTTYLVW). Over 514–548 (TCLITQGATLLAHSSHQRFLYGLPEEDQEKGRTSG) the chain is Cytoplasmic.

This sequence belongs to the NRAMP family.

The protein localises to the late endosome membrane. Its subcellular location is the lysosome membrane. It carries out the reaction Zn(2+)(in) + H(+)(out) = Zn(2+)(out) + H(+)(in). The enzyme catalyses Fe(2+)(in) + H(+)(out) = Fe(2+)(out) + H(+)(in). The catalysed reaction is Mn(2+)(in) + H(+)(out) = Mn(2+)(out) + H(+)(in). Its function is as follows. Macrophage-specific antiporter that fluxes metal ions in either direction against a proton gradient. Localized to late endosomal lysosomal membranes, delivers bivalent cations from the cytosol into these acidic compartments where they may directly affect antimicrobial activity. Involved in iron metabolism and host natural resistance to infection with intracellular parasites. Pathogen resistance involves sequestration of Fe(2+) and Mn(2+), cofactors of both prokaryotic and eukaryotic catalases and superoxide dismutases, not only to protect the macrophage against its own generation of reactive oxygen species, but to deny the cations to the pathogen for synthesis of its protective enzymes. This Bison bison (American bison) protein is Natural resistance-associated macrophage protein 1 (SLC11A1).